We begin with the raw amino-acid sequence, 603 residues long: Myotubularin (603 aa).

The segment covering 1 to 13 (MASASTSKYNSHS) has biased composition (polar residues). The disordered stretch occupies residues 1–25 (MASASTSKYNSHSLENESIKRTSRD). Phosphoserine is present on residues serine 13 and serine 18. The span at 14 to 25 (LENESIKRTSRD) shows a compositional bias: basic and acidic residues. The GRAM domain occupies 29-97 (RDLTEAVPRL…GVISRIEKMG (69 aa)). A Myotubularin phosphatase domain is found at 163–538 (GWTVYNPVEE…RHLELWVNYY (376 aa)). A 1,2-diacyl-sn-glycero-3-phospho-(1D-myo-inositol-3,5-bisphosphate)-binding residues include asparagine 288, asparagine 313, and isoleucine 314. A 1,2-diacyl-sn-glycero-3-phospho-(1D-myo-inositol-3-phosphate) is bound by residues asparagine 288, asparagine 313, and isoleucine 314. Residue cysteine 375 is the Phosphocysteine intermediate of the active site. Residues serine 376, aspartate 377, glycine 378, tryptophan 379, aspartate 380, arginine 381, lysine 417, and arginine 421 each coordinate a 1,2-diacyl-sn-glycero-3-phospho-(1D-myo-inositol-3,5-bisphosphate). The a 1,2-diacyl-sn-glycero-3-phospho-(1D-myo-inositol-3-phosphate) site is built by serine 376, aspartate 377, glycine 378, tryptophan 379, aspartate 380, and arginine 381. Residue arginine 421 participates in a 1,2-diacyl-sn-glycero-3-phospho-(1D-myo-inositol-3-phosphate) binding. Threonine 495 carries the post-translational modification Phosphothreonine. The segment at 579 to 603 (SAKLSDPPTSPSSPSQMMPHVQTHF) is disordered. Phosphoserine is present on serine 588.

This sequence belongs to the protein-tyrosine phosphatase family. Non-receptor class myotubularin subfamily. Heterodimer with MTMR12. Interacts with KMT2A/MLL1 (via SET domain). Interacts with DES in skeletal muscle but not in cardiac muscle. Interacts with SPEG.

It localises to the cytoplasm. The protein resides in the cell membrane. Its subcellular location is the cell projection. It is found in the filopodium. The protein localises to the ruffle. It localises to the late endosome. The protein resides in the myofibril. Its subcellular location is the sarcomere. It carries out the reaction a 1,2-diacyl-sn-glycero-3-phospho-(1D-myo-inositol-3-phosphate) + H2O = a 1,2-diacyl-sn-glycero-3-phospho-(1D-myo-inositol) + phosphate. It catalyses the reaction a 1,2-diacyl-sn-glycero-3-phospho-(1D-myo-inositol-3,5-bisphosphate) + H2O = a 1,2-diacyl-sn-glycero-3-phospho-(1D-myo-inositol-5-phosphate) + phosphate. The enzyme catalyses 1,2-dioctanoyl-sn-glycero-3-phospho-(1-D-myo-inositol-3-phosphate) + H2O = 1,2-dioctanoyl-sn-glycero-3-phospho-(1D-myo-inositol) + phosphate. The catalysed reaction is 1,2-dioctanoyl-sn-glycero-3-phospho-(1D-myo-inositol-3,5-bisphosphate) + H2O = 1,2-dioctanoyl-sn-glycero-3-phospho-(1D-myo-inositol-5-phosphate) + phosphate. It carries out the reaction 1,2-dihexadecanoyl-sn-glycero-3-phospho-(1D-myo-inositol-3,5-phosphate) + H2O = 1,2-dihexadecanoyl-sn-glycero-3-phospho-(1D-myo-inositol-5-phosphate) + phosphate. Allosterically activated by phosphatidylinositol 5-phosphate (PI5P). In terms of biological role, lipid phosphatase which dephosphorylates phosphatidylinositol 3-monophosphate (PI3P) and phosphatidylinositol 3,5-bisphosphate (PI(3,5)P2). Has also been shown to dephosphorylate phosphotyrosine- and phosphoserine-containing peptides. Negatively regulates EGFR degradation through regulation of EGFR trafficking from the late endosome to the lysosome. Plays a role in vacuolar formation and morphology. Regulates desmin intermediate filament assembly and architecture. Plays a role in mitochondrial morphology and positioning. Required for skeletal muscle maintenance but not for myogenesis. In skeletal muscles, stabilizes MTMR12 protein levels. The sequence is that of Myotubularin from Homo sapiens (Human).